The primary structure comprises 529 residues: Type I restriction enzyme StySPI methylase subunit (529 aa).

Residues 148–153, 178–180, and glutamate 216 each bind S-adenosyl-L-methionine; these read QYFTPR and TAG. Residues 424–443 form a disordered region; sequence AEESEVADSEENKNADQHQA.

Belongs to the N(4)/N(6)-methyltransferase family. The type I restriction/modification system is composed of three polypeptides R, M and S; the restriction enzyme has stoichiometry R(2)M(2)S(1) while the methyltransferase is M(2)S(1).

The catalysed reaction is a 2'-deoxyadenosine in DNA + S-adenosyl-L-methionine = an N(6)-methyl-2'-deoxyadenosine in DNA + S-adenosyl-L-homocysteine + H(+). Its function is as follows. The subtype gamma methyltransferase (M) subunit of a type I restriction enzyme. The M and S subunits together form a methyltransferase (MTase) that methylates A-2 on the top strand and A-3 on the bottom strand of the sequence 5'-AACN(6)GTRC-3'. In the presence of the R subunit the complex can also act as an endonuclease, binding to the same target sequence but cutting the DNA some distance from this site. Whether the DNA is cut or modified depends on the methylation state of the target sequence. When the target site is unmodified, the DNA is cut. When the target site is hemimethylated, the complex acts as a maintenance MTase modifying the DNA so that both strands become methylated. After locating a non-methylated recognition site, the enzyme complex serves as a molecular motor that translocates DNA in an ATP-dependent manner until a collision occurs that triggers cleavage. The sequence is that of Type I restriction enzyme StySPI methylase subunit from Salmonella potsdam.